The chain runs to 194 residues: Large ribosomal subunit protein eL15 (194 aa).

The tract at residues 164 to 194 (SAGKKGRGLRNKGIGAEKVRPSIRAHGRRGK) is disordered. Residues 184-194 (PSIRAHGRRGK) are compositionally biased toward basic residues.

Belongs to the eukaryotic ribosomal protein eL15 family.

The chain is Large ribosomal subunit protein eL15 (rpl15e) from Methanocaldococcus jannaschii (strain ATCC 43067 / DSM 2661 / JAL-1 / JCM 10045 / NBRC 100440) (Methanococcus jannaschii).